Consider the following 303-residue polypeptide: Counting factor 50 (303 aa).

The first 24 residues, 1-24 (MNKMNNIFLIISSIILSIVIFVSG), serve as a signal peptide directing secretion. A Ch-type lysozyme domain is found at 28 to 240 (IDFSSEISVG…CSTSSGSASG (213 aa)). The N-linked (GlcNAc...) asparagine glycan is linked to asparagine 67. Glutamate 125 is an active-site residue. N-linked (GlcNAc...) asparagine glycosylation is present at asparagine 170. Positions 226–303 (GSGSGCSTSS…GSGTGSGSSI (78 aa)) are S-G-S motif repeats. Positions 236–292 (GSASGSASGSASGSASGSNSGSSNSGSSNSGSSNSGSNSGSSNSGSGNSGSSNSGSA) are enriched in low complexity. The tract at residues 236–303 (GSASGSASGS…GSGTGSGSSI (68 aa)) is disordered. Positions 293–303 (SGSGTGSGSSI) are enriched in gly residues.

This sequence belongs to the glycosyl hydrolase 25 family. Monomer. Component of the counting factor (CF) complex, which includes cf60, cf50, cf45-1 and ctnA.

The protein localises to the secreted. It catalyses the reaction Hydrolysis of (1-&gt;4)-beta-linkages between N-acetylmuramic acid and N-acetyl-D-glucosamine residues in a peptidoglycan and between N-acetyl-D-glucosamine residues in chitodextrins.. Its function is as follows. Cell-counting factor that limits the maximum size of the multicellular structure during aggregation. Has a very low lysozyme activity. In Dictyostelium discoideum (Social amoeba), this protein is Counting factor 50 (cf50-1).